The primary structure comprises 227 residues: GTP:AMP phosphotransferase AK3, mitochondrial (227 aa).

GTP contacts are provided by G17, G19, K20, G21, and T22. Residue K20 is modified to N6-succinyllysine. K34 carries the N6-acetyllysine modification. S37 bears the Phosphoserine mark. Residues 37-66 (SSGDLLRDNMLRGTEIGVLAKAFIDQGKLI) form an NMP region. 2 residues coordinate AMP: S38 and R43. K57 bears the N6-succinyllysine mark. Residue K64 coordinates AMP. K64 and K80 each carry N6-acetyllysine; alternate. N6-succinyllysine; alternate is present on residues K64 and K80. G91, R94, and Q98 together coordinate AMP. The interval 127–164 (ARWIHPASGRVYNIEFNPPKTVGIDDLTGEPLIQREDD) is LID. The GTP site is built by R128, Y138, N139, R161, and R172. N6-acetyllysine; alternate occurs at positions 174 and 189. An N6-succinyllysine; alternate mark is found at K174 and K189. T201 is a GTP binding site. Residue K203 is modified to N6-acetyllysine.

This sequence belongs to the adenylate kinase family. AK3 subfamily. In terms of assembly, monomer. As to expression, highly expressed in heart, skeletal muscle and liver, moderately expressed in pancreas and kidney, and weakly expressed in placenta, brain and lung.

It localises to the mitochondrion matrix. The enzyme catalyses a ribonucleoside 5'-triphosphate + AMP = a ribonucleoside 5'-diphosphate + ADP. It carries out the reaction GTP + AMP = GDP + ADP. The catalysed reaction is ITP + AMP = IDP + ADP. With respect to regulation, inhibited by ATP. Its function is as follows. Mitochondrial adenylate kinase with a specific GTP:AMP phosphotransferase activity. Could also use ITP as phosphate donor. Its physiological function is to recycle GTP into GDP which is necessary for the TCA cycle in the mitochondrial matrix. In Homo sapiens (Human), this protein is GTP:AMP phosphotransferase AK3, mitochondrial.